A 312-amino-acid polypeptide reads, in one-letter code: Acetyl-coenzyme A carboxylase carboxyl transferase subunit alpha (312 aa).

The region spanning R36–T286 is the CoA carboxyltransferase C-terminal domain.

Belongs to the AccA family. As to quaternary structure, acetyl-CoA carboxylase is a heterohexamer composed of biotin carboxyl carrier protein (AccB), biotin carboxylase (AccC) and two subunits each of ACCase subunit alpha (AccA) and ACCase subunit beta (AccD).

It is found in the cytoplasm. It carries out the reaction N(6)-carboxybiotinyl-L-lysyl-[protein] + acetyl-CoA = N(6)-biotinyl-L-lysyl-[protein] + malonyl-CoA. It participates in lipid metabolism; malonyl-CoA biosynthesis; malonyl-CoA from acetyl-CoA: step 1/1. In terms of biological role, component of the acetyl coenzyme A carboxylase (ACC) complex. First, biotin carboxylase catalyzes the carboxylation of biotin on its carrier protein (BCCP) and then the CO(2) group is transferred by the carboxyltransferase to acetyl-CoA to form malonyl-CoA. In Helicobacter pylori (strain G27), this protein is Acetyl-coenzyme A carboxylase carboxyl transferase subunit alpha.